The chain runs to 463 residues: Type IV secretion system protein PtlD (463 aa).

Positions 1–24 are cleaved as a signal peptide; the sequence is MAGLSRILLSCTLACLLAGQAAQA. 5 helical membrane-spanning segments follow: residues 118 to 138, 232 to 252, 253 to 273, 294 to 314, and 333 to 353; these read LQPL…YALL, WLLC…LAAS, LLIV…LFLV, ALVF…VLAG, and MLAA…VPLA. The span at 376-410 shows a compositional bias: low complexity; it reads AHRQAAARQYAPRPAAAAAAAGPHQAGTYAASATP. A disordered region spans residues 376 to 463; the sequence is AHRQAAARQY…RVLPRKPNLP (88 aa). The segment covering 411-420 has biased composition (pro residues); sequence APAPARPAPS. The span at 441–455 shows a compositional bias: basic and acidic residues; the sequence is VRRDDRPAPAPDRRV.

Its subcellular location is the cell membrane. In terms of biological role, component of the type IV secretion system ptl required for secretion of assembled pertussis toxin (PTX) through the outer membrane. This is Type IV secretion system protein PtlD (ptlD) from Bordetella pertussis (strain Tohama I / ATCC BAA-589 / NCTC 13251).